The chain runs to 987 residues: KAT8 regulatory NSL complex subunit 1-like protein (987 aa).

K134 is covalently cross-linked (Glycyl lysine isopeptide (Lys-Gly) (interchain with G-Cter in SUMO2)). Position 462 is a phosphoserine (S462). A disordered region spans residues 708 to 738 (RKKRHLSETALGERTKLEESDFQHTESGSHS). Residues 718 to 731 (LGERTKLEESDFQH) are compositionally biased toward basic and acidic residues. A PEHE domain is found at 794-915 (EILTPSWRMV…QSQETKSLWW (122 aa)). An N6-acetyllysine modification is found at K859. The disordered stretch occupies residues 949–972 (GEIFGTSVPENGHHPKKQSDGMEE). Residues 959 to 972 (NGHHPKKQSDGMEE) are compositionally biased toward basic and acidic residues.

Acetylated on lysine residues by KAT8 upon ionizing radiation-induced DNA damage; deacetylated by HDAC3.

This chain is KAT8 regulatory NSL complex subunit 1-like protein (KANSL1L), found in Homo sapiens (Human).